The sequence spans 509 residues: Bifunctional purine biosynthesis protein PurH (509 aa).

Residues 1 to 144 enclose the MGS-like domain; that stretch reads MKRALISVSD…KNYAAVTVVV (144 aa).

Belongs to the PurH family.

It catalyses the reaction (6R)-10-formyltetrahydrofolate + 5-amino-1-(5-phospho-beta-D-ribosyl)imidazole-4-carboxamide = 5-formamido-1-(5-phospho-D-ribosyl)imidazole-4-carboxamide + (6S)-5,6,7,8-tetrahydrofolate. The catalysed reaction is IMP + H2O = 5-formamido-1-(5-phospho-D-ribosyl)imidazole-4-carboxamide. It participates in purine metabolism; IMP biosynthesis via de novo pathway; 5-formamido-1-(5-phospho-D-ribosyl)imidazole-4-carboxamide from 5-amino-1-(5-phospho-D-ribosyl)imidazole-4-carboxamide (10-formyl THF route): step 1/1. It functions in the pathway purine metabolism; IMP biosynthesis via de novo pathway; IMP from 5-formamido-1-(5-phospho-D-ribosyl)imidazole-4-carboxamide: step 1/1. In Listeria monocytogenes serovar 1/2a (strain ATCC BAA-679 / EGD-e), this protein is Bifunctional purine biosynthesis protein PurH.